The sequence spans 198 residues: MKQPSALSALVEALRALPGVGPKSAQRMAYHLMQHDRDGAEKLGRSLLFATEHLQHCEKCNTFTEAQICEVCLDEERDPTLLCVVETPADQIMLEQTMTYRGLYFVLMGRLSPLDGIGPKEIHFDRLVRRASDGVVKEVVLATNFTNEGEATAHYLGQTLKARGLAVTRLARGVPVGGELEYVDAGTIARAMLDRRSM.

The C4-type zinc finger occupies 57–72 (CEKCNTFTEAQICEVC). In terms of domain architecture, Toprim spans 80-175 (TLLCVVETPA…AVTRLARGVP (96 aa)).

It belongs to the RecR family.

May play a role in DNA repair. It seems to be involved in an RecBC-independent recombinational process of DNA repair. It may act with RecF and RecO. The sequence is that of Recombination protein RecR from Paraburkholderia xenovorans (strain LB400).